The chain runs to 436 residues: Origin recognition complex subunit 4 (436 aa).

N6-methyllysine is present on Lys-7. Residue 67-74 participates in ATP binding; sequence GPRGSGKT.

The protein belongs to the ORC4 family. In terms of assembly, component of ORC, a complex composed of at least 6 subunits: ORC1, ORC2, ORC3, ORC4, ORC5 and ORC6. ORC is regulated in a cell-cycle dependent manner. It is sequentially assembled at the exit from anaphase of mitosis and disassembled as cells enter S phase. Interacts with DBF4. Interacts with POLQ.

Its subcellular location is the nucleus. Functionally, component of the origin recognition complex (ORC) that binds origins of replication. DNA-binding is ATP-dependent. The specific DNA sequences that define origins of replication have not been identified yet. ORC is required to assemble the pre-replication complex necessary to initiate DNA replication. Binds histone H3 and H4 trimethylation marks H3K9me3, H3K27me3 and H4K20me3. The chain is Origin recognition complex subunit 4 (ORC4) from Homo sapiens (Human).